A 334-amino-acid polypeptide reads, in one-letter code: Uracil-DNA glycosylase (334 aa).

Over residues methionine 1–serine 17 the composition is skewed to basic residues. 2 disordered regions span residues methionine 1–serine 63 and valine 79–serine 104. A compositionally biased stretch (polar residues) spans glycine 40–arginine 50. The active-site Proton acceptor is the aspartate 178.

This sequence belongs to the uracil-DNA glycosylase (UDG) superfamily. UNG family.

It localises to the host nucleus. The enzyme catalyses Hydrolyzes single-stranded DNA or mismatched double-stranded DNA and polynucleotides, releasing free uracil.. Its function is as follows. Excises uracil residues from the DNA which can arise as a result of misincorporation of dUMP residues by DNA polymerase or deamination of cytosines. Therefore may reduce deleterious uracil incorporation into the viral genome, particularly in terminally differentiated cells which lack DNA repair enzymes. The protein is Uracil-DNA glycosylase of Human herpesvirus 1 (strain 17) (HHV-1).